Reading from the N-terminus, the 822-residue chain is Fibroblast growth factor receptor 1 (822 aa).

Residues 1–21 (MWGWRGLLFWAVLVTATLCTA) form the signal peptide. Residues 22-376 (RPAPTLPEQA…AVMTSPLYLE (355 aa)) are Extracellular-facing. The 95-residue stretch at 25 to 119 (PTLPEQAQPW…DTTYFSVNVS (95 aa)) folds into the Ig-like C2-type 1 domain. An intrachain disulfide couples Cys55 to Cys101. N-linked (GlcNAc...) asparagine glycans are attached at residues Asn77 and Asn117. The tract at residues 120-162 (DALPSSEDDDDDDDSSSEEKETDNTKPNRRPVAPYWTSPEKME) is disordered. Residues 125–135 (SEDDDDDDDSS) show a composition bias toward acidic residues. A compositionally biased stretch (basic and acidic residues) spans 136-145 (SEEKETDNTK). 2 Ig-like C2-type domains span residues 158–246 (PEKM…YQLD) and 255–357 (PILQ…AWLT). A heparin-binding region spans residues 160 to 177 (KMEKKLHAVPAAKTVKFK). A disulfide bridge links Cys178 with Cys230. Asn227, Asn240, Asn264, Asn296, Asn317, and Asn330 each carry an N-linked (GlcNAc...) asparagine glycan. A disulfide bond links Cys277 and Cys341. The chain crosses the membrane as a helical span at residues 377-397 (IIIYCTGAFLISCMVGSVIIY). Residues 398-822 (KMKSGTKKSD…QLANGGLNRR (425 aa)) are Cytoplasmic-facing. Tyr463 is subject to Phosphotyrosine; by autocatalysis. Residues 478–767 (LVLGKPLGEG…VALTSNQEYL (290 aa)) enclose the Protein kinase domain. Residues 484–490 (LGEGCFG), Lys514, 562–564 (EYA), and Asn568 contribute to the ATP site. 2 positions are modified to phosphotyrosine; by autocatalysis: Tyr583 and Tyr585. The Proton acceptor role is filled by Asp623. ATP contacts are provided by Arg627 and Asp641. Tyr653, Tyr654, Tyr730, and Tyr766 each carry phosphotyrosine; by autocatalysis. The interval 770 to 822 (SMPLDQDSPSFPDTRSSTCSSGEDSVFSHEPFPEEPCLPRHPTQLANGGLNRR) is disordered. Positions 776–792 (DSPSFPDTRSSTCSSGE) are enriched in polar residues.

The protein belongs to the protein kinase superfamily. Tyr protein kinase family. Fibroblast growth factor receptor subfamily. In terms of assembly, monomer. Homodimer after ligand binding. Interacts predominantly with FGF1 and FGF2, but can also interact with FGF3, FGF4, FGF5, FGF6, FGF8, FGF10, FGF19, FGF21, FGF22 and FGF23 (in vitro). Ligand specificity is determined by tissue-specific expression of isoforms, and differences in the third Ig-like domain are crucial for ligand specificity. Affinity for fibroblast growth factors (FGFs) is increased by heparan sulfate glycosaminoglycans that function as coreceptors. Likewise, KLB increases the affinity for FGF19, FGF21 and FGF23. Interacts (phosphorylated on Tyr-766) with PLCG1 (via SH2 domains). Interacts with FRS2. Interacts (via C-terminus) with NEDD4 (via WW3 domain). Interacts with RPS6KA1. Interacts with KL. Interacts with SHB (via SH2 domain) and GRB10. Interacts with ANOS1; this interaction does not interfere with FGF2-binding to FGFR1, but prevents binding of heparin-bound FGF2. Interacts with SOX2 and SOX3. Interacts with FLRT1, FLRT2 and FLRT3. Found in a ternary complex with FGF1 and ITGAV:ITGB3. Post-translationally, autophosphorylated. Binding of FGF family members together with heparan sulfate proteoglycan or heparin promotes receptor dimerization and autophosphorylation on tyrosine residues. Autophosphorylation occurs in trans between the two FGFR molecules present in the dimer and proceeds in a highly ordered manner. Initial autophosphorylation at Tyr-653 increases the kinase activity by a factor of 50 to 100. After this, Tyr-583 becomes phosphorylated, followed by phosphorylation of Tyr-463, Tyr-766, Tyr-583 and Tyr-585. In a third stage, Tyr-654 is autophosphorylated, resulting in a further tenfold increase of kinase activity. Phosphotyrosine residues provide docking sites for interacting proteins and so are crucial for FGFR1 function and its regulation. In terms of processing, ubiquitinated. FGFR1 is rapidly ubiquitinated by NEDD4 after autophosphorylation, leading to internalization and lysosomal degradation. CBL is recruited to activated FGFR1 via FRS2 and GRB2, and mediates ubiquitination and subsequent degradation of FGFR1. N-glycosylated in the endoplasmic reticulum. The N-glycan chains undergo further maturation to an Endo H-resistant form in the Golgi apparatus. As to expression, expressed in the parathyroid.

The protein resides in the cell membrane. It is found in the nucleus. Its subcellular location is the cytoplasm. It localises to the cytosol. The protein localises to the cytoplasmic vesicle. The catalysed reaction is L-tyrosyl-[protein] + ATP = O-phospho-L-tyrosyl-[protein] + ADP + H(+). Its activity is regulated as follows. Present in an inactive conformation in the absence of bound ligand. Ligand binding leads to dimerization and activation by sequential autophosphorylation on tyrosine residues. Functionally, tyrosine-protein kinase that acts as a cell-surface receptor for fibroblast growth factors and plays an essential role in the regulation of embryonic development, cell proliferation, differentiation and migration. Required for normal mesoderm patterning and correct axial organization during embryonic development, normal skeletogenesis and normal development of the gonadotropin-releasing hormone (GnRH) neuronal system. Phosphorylates PLCG1, FRS2, GAB1 and SHB. Ligand binding leads to the activation of several signaling cascades. Activation of PLCG1 leads to the production of the cellular signaling molecules diacylglycerol and inositol 1,4,5-trisphosphate. Phosphorylation of FRS2 triggers recruitment of GRB2, GAB1, PIK3R1 and SOS1, and mediates activation of RAS, MAPK1/ERK2, MAPK3/ERK1 and the MAP kinase signaling pathway, as well as of the AKT1 signaling pathway. Promotes phosphorylation of SHC1, STAT1 and PTPN11/SHP2. In the nucleus, enhances RPS6KA1 and CREB1 activity and contributes to the regulation of transcription. FGFR1 signaling is down-regulated by IL17RD/SEF, and by FGFR1 ubiquitination, internalization and degradation. The sequence is that of Fibroblast growth factor receptor 1 (Fgfr1) from Rattus norvegicus (Rat).